Here is a 72-residue protein sequence, read N- to C-terminus: Translation initiation factor IF-1 (72 aa).

One can recognise an S1-like domain in the interval 1 to 72 (MPKEEVLEFP…TKGRITYRFK (72 aa)).

The protein belongs to the IF-1 family. Component of the 30S ribosomal translation pre-initiation complex which assembles on the 30S ribosome in the order IF-2 and IF-3, IF-1 and N-formylmethionyl-tRNA(fMet); mRNA recruitment can occur at any time during PIC assembly.

It localises to the cytoplasm. In terms of biological role, one of the essential components for the initiation of protein synthesis. Stabilizes the binding of IF-2 and IF-3 on the 30S subunit to which N-formylmethionyl-tRNA(fMet) subsequently binds. Helps modulate mRNA selection, yielding the 30S pre-initiation complex (PIC). Upon addition of the 50S ribosomal subunit IF-1, IF-2 and IF-3 are released leaving the mature 70S translation initiation complex. This Chelativorans sp. (strain BNC1) protein is Translation initiation factor IF-1.